Here is a 364-residue protein sequence, read N- to C-terminus: Probable G-protein coupled receptor AH9.4 (364 aa).

Residue Met1 is a topological domain, extracellular. The helical transmembrane segment at 2–22 (AFLQSAYLVMVFTVPIAGVIL) threads the bilayer. Residues 23–48 (NTYVLRKLIRVARKSVVRFETTSGLP) lie on the Cytoplasmic side of the membrane. A helical transmembrane segment spans residues 49–69 (LAAMSVGDSITLCALLMQAIF). Residues 70–89 (HITPKGEVPTVVLSSICKFG) lie on the Extracellular side of the membrane. The chain crosses the membrane as a helical span at residues 90–110 (IFLIHSTSAFSVWCWFFLSVL). Residues 111-130 (RYIAVFHPFKYRTIWRQPRN) are Cytoplasmic-facing. Residues 131-151 (ALKFLAGAVGMFQIYTLIFVT) traverse the membrane as a helical segment. The Extracellular segment spans residues 152–177 (YRQEEKSCGEYDVFHESAFKHVHLLD). The helical transmembrane segment at 178–198 (IFLFYAIPSLLRITLDFLVLI) threads the bilayer. At 199–277 (HCYSPFSVEG…KKKTAMVMRS (79 aa)) the chain is on the cytoplasmic side. A helical membrane pass occupies residues 278-298 (ILISVLNLLLNLPSHIFRAWA). The Extracellular portion of the chain corresponds to 299-315 (SYDESSLENEIVRTLEP). Residues 316–336 (IAQMMYFSQFACNAFYLATSI) form a helical membrane-spanning segment. Over 337-364 (YETNGSPRNTVISSSNRHVSRCISDDEA) the chain is Cytoplasmic.

Belongs to the G-protein coupled receptor 1 family.

The protein localises to the cell membrane. In terms of biological role, not known. Putative receptor. This Caenorhabditis elegans protein is Probable G-protein coupled receptor AH9.4.